A 326-amino-acid polypeptide reads, in one-letter code: Pyruvate dehydrogenase E1 component subunit alpha (326 aa).

As to quaternary structure, heterodimer of an alpha and a beta chain. Requires thiamine diphosphate as cofactor.

The catalysed reaction is N(6)-[(R)-lipoyl]-L-lysyl-[protein] + pyruvate + H(+) = N(6)-[(R)-S(8)-acetyldihydrolipoyl]-L-lysyl-[protein] + CO2. The pyruvate dehydrogenase complex catalyzes the overall conversion of pyruvate to acetyl-CoA and CO(2). It contains multiple copies of three enzymatic components: pyruvate dehydrogenase (E1), dihydrolipoamide acetyltransferase (E2) and lipoamide dehydrogenase (E3). In Rickettsia bellii (strain RML369-C), this protein is Pyruvate dehydrogenase E1 component subunit alpha (pdhA).